The sequence spans 585 residues: A-type ATP synthase subunit A (585 aa).

An ATP-binding site is contributed by 231–238; the sequence is GPFGSGKT.

It belongs to the ATPase alpha/beta chains family. As to quaternary structure, has multiple subunits with at least A(3), B(3), C, D, E, F, H, I and proteolipid K(x).

The protein resides in the cell membrane. The catalysed reaction is ATP + H2O + 4 H(+)(in) = ADP + phosphate + 5 H(+)(out). Its function is as follows. Produces ATP from ADP in the presence of a proton gradient across the membrane. The archaeal alpha chain is a catalytic subunit. In terms of biological role, component of the A-type ATP synthase that produces ATP from ADP in the presence of a proton gradient across the membrane. The A chain is the catalytic subunit. This is A-type ATP synthase subunit A from Thermococcus sp. (strain KI).